The primary structure comprises 172 residues: MESRFKLKEEYHQSCCAIQVRVPVIKTSSTKRKNQLYTTGPFIMRSSSPSQPPSIKAQHRIAKHKAIRRRRIDLNCGCSIFYHIKCADHGFTHRGEHHCASGREFRFYLGGTKSPLFQDHAGGRSSIHTDKDIPHPNQVQSQPQESTGSPQSIPELPSLDDIDSSFWDDIFK.

Residues 56 to 71 carry the Nuclear localization signal motif; sequence KAQHRIAKHKAIRRRR. A zinc finger lies at 76–93; that stretch reads CGCSIFYHIKCADHGFTH. Residues 119 to 172 form a disordered region; the sequence is DHAGGRSSIHTDKDIPHPNQVQSQPQESTGSPQSIPELPSLDDIDSSFWDDIFK. Polar residues predominate over residues 137–152; the sequence is NQVQSQPQESTGSPQS. A transactivation region spans residues 158 to 172; it reads SLDDIDSSFWDDIFK.

The protein belongs to the geminiviridae transcriptional activator protein family. In terms of assembly, monomer. Homodimer. Homooligomer. Self-interaction correlates with nuclear localization and efficient activation of transcription. Monomers suppress local silencing by interacting with and inactivating host adenosine kinase 2 (ADK2) in the cytoplasm. Interacts with and inhibits host SNF1 kinase. Binds to ssDNA. Phosphorylated.

Its subcellular location is the host nucleus. It is found in the host cytoplasm. In terms of biological role, strong activator of the late viral genes promoters. Enhances the expression of the capsid protein and nuclear shuttle protein. Acts as a suppressor of RNA-mediated gene silencing, also known as post-transcriptional gene silencing (PTGS), a mechanism of plant viral defense that limits the accumulation of viral RNAs. Suppresses the host RNA silencing by inhibiting adenosine kinase 2 (ADK2), a kinase involved in a general methylation pathway. Also suppresses the host basal defense by interacting with and inhibiting SNF1 kinase, a key regulator of cell metabolism implicated in innate antiviral defense. Determines pathogenicity. The polypeptide is Transcriptional activator protein (Bean golden yellow mosaic virus (isolate Puerto Rico) (BGYMV)).